A 176-amino-acid chain; its full sequence is MLRFLNQCSRGRGAWLLMAFTALALEMVALWFQHVMLLKPCVLCIYERCALFGVMGAGLVGAIAPKTPLRYVAMVIWIYSAWRGLQLAYEHTMIQLHPSPFMTCDFMARFPDWLPLGKWLPQVFVASGDCAERQWSFLTLEMPQWLLGIFAAYLVVAIAVVIAQAFKPKKRDLFGR.

Residues 1 to 14 are Cytoplasmic-facing; the sequence is MLRFLNQCSRGRGA. Residues 15 to 31 traverse the membrane as a helical segment; it reads WLLMAFTALALEMVALW. The Periplasmic segment spans residues 32–49; the sequence is FQHVMLLKPCVLCIYERC. An intrachain disulfide couples cysteine 41 to cysteine 44. Residues 50–65 form a helical membrane-spanning segment; that stretch reads ALFGVMGAGLVGAIAP. Over 66–71 the chain is Cytoplasmic; the sequence is KTPLRY. The helical transmembrane segment at 72-89 threads the bilayer; the sequence is VAMVIWIYSAWRGLQLAY. Topologically, residues 90 to 144 are periplasmic; it reads EHTMIQLHPSPFMTCDFMARFPDWLPLGKWLPQVFVASGDCAERQWSFLTLEMPQ. Cysteine 104 and cysteine 130 form a disulfide bridge. Residues 145 to 163 form a helical membrane-spanning segment; sequence WLLGIFAAYLVVAIAVVIA. Residues 164 to 176 are Cytoplasmic-facing; sequence QAFKPKKRDLFGR.

It belongs to the DsbB family.

The protein resides in the cell inner membrane. Required for disulfide bond formation in some periplasmic proteins. Acts by oxidizing the DsbA protein. This Salmonella paratyphi A (strain ATCC 9150 / SARB42) protein is Disulfide bond formation protein B.